Consider the following 119-residue polypeptide: Large ribosomal subunit protein bL19 (119 aa).

This sequence belongs to the bacterial ribosomal protein bL19 family.

This protein is located at the 30S-50S ribosomal subunit interface and may play a role in the structure and function of the aminoacyl-tRNA binding site. The protein is Large ribosomal subunit protein bL19 of Idiomarina loihiensis (strain ATCC BAA-735 / DSM 15497 / L2-TR).